The primary structure comprises 311 residues: Phospho-N-acetylmuramoyl-pentapeptide-transferase (311 aa).

The next 10 helical transmembrane spans lie at 2–22 (ENNV…IEGF), 48–68 (GTPT…LLNF), 74–94 (SFLI…DDFM), 104–124 (ITAV…VYFI), 144–164 (LGWF…NAVN), 168–188 (GVDG…LIVG), 192–212 (VVYL…WHPA), 214–234 (IFMG…SFAL), 237–257 (LELF…SVII), and 288–308 (KIAF…IIGW).

This sequence belongs to the glycosyltransferase 4 family. MraY subfamily. The cofactor is Mg(2+).

The protein resides in the cell inner membrane. The enzyme catalyses UDP-N-acetyl-alpha-D-muramoyl-L-alanyl-gamma-D-glutamyl-meso-2,6-diaminopimeloyl-D-alanyl-D-alanine + di-trans,octa-cis-undecaprenyl phosphate = di-trans,octa-cis-undecaprenyl diphospho-N-acetyl-alpha-D-muramoyl-L-alanyl-D-glutamyl-meso-2,6-diaminopimeloyl-D-alanyl-D-alanine + UMP. It functions in the pathway cell wall biogenesis; peptidoglycan biosynthesis. In terms of biological role, catalyzes the initial step of the lipid cycle reactions in the biosynthesis of the cell wall peptidoglycan: transfers peptidoglycan precursor phospho-MurNAc-pentapeptide from UDP-MurNAc-pentapeptide onto the lipid carrier undecaprenyl phosphate, yielding undecaprenyl-pyrophosphoryl-MurNAc-pentapeptide, known as lipid I. In Kosmotoga olearia (strain ATCC BAA-1733 / DSM 21960 / TBF 19.5.1), this protein is Phospho-N-acetylmuramoyl-pentapeptide-transferase.